The primary structure comprises 116 residues: UPF0122 protein CA_C1753 (116 aa).

This sequence belongs to the UPF0122 family.

Its function is as follows. Might take part in the signal recognition particle (SRP) pathway. This is inferred from the conservation of its genetic proximity to ftsY/ffh. May be a regulatory protein. This chain is UPF0122 protein CA_C1753, found in Clostridium acetobutylicum (strain ATCC 824 / DSM 792 / JCM 1419 / IAM 19013 / LMG 5710 / NBRC 13948 / NRRL B-527 / VKM B-1787 / 2291 / W).